We begin with the raw amino-acid sequence, 399 residues long: Acetylornithine aminotransferase (399 aa).

Residues 97-98 and Phe130 contribute to the pyridoxal 5'-phosphate site; that span reads GA. Arg133 is a binding site for N(2)-acetyl-L-ornithine. Position 215-218 (215-218) interacts with pyridoxal 5'-phosphate; sequence DEVQ. An N6-(pyridoxal phosphate)lysine modification is found at Lys244. A N(2)-acetyl-L-ornithine-binding site is contributed by Thr272. A pyridoxal 5'-phosphate-binding site is contributed by Thr273.

It belongs to the class-III pyridoxal-phosphate-dependent aminotransferase family. ArgD subfamily. Homodimer. The cofactor is pyridoxal 5'-phosphate.

It is found in the cytoplasm. It carries out the reaction N(2)-acetyl-L-ornithine + 2-oxoglutarate = N-acetyl-L-glutamate 5-semialdehyde + L-glutamate. It participates in amino-acid biosynthesis; L-arginine biosynthesis; N(2)-acetyl-L-ornithine from L-glutamate: step 4/4. This chain is Acetylornithine aminotransferase, found in Mesorhizobium japonicum (strain LMG 29417 / CECT 9101 / MAFF 303099) (Mesorhizobium loti (strain MAFF 303099)).